The chain runs to 480 residues: MNDVAIVKEGWLHKRGEYIKTWRPRYFLLKNDGTFIGYKERPQDLEQRESPLNNFSVAQCQLMKTERPRPNTFIIRCLQWTTVIERTFHVETPEEREEWTTAIQTVADGLKRQEEETMDFRSGSPGENSGAEEMEVSLAKPKHRVTMNDFEYLKLLGKGTFGKVILVKEKATGRYYAMKILKKEVIVAKDEVAHTLTENRVLQNSRHPFLTALKYSFQTHDRLCFVMEYANGGELFFHLSRERVFSEDRARFYGAEIVSALDYLHSEKEVVYRDLKLENLMLDKDGHIKITDFGLCKEGIKDGATMKTFCGTPEYLAPEVLEDNDYGRAVDWWGLGVVMYEMMCGRLPFYNQDHEKLFELILMEEIRFPRTLSPEAKSLLSGLLKKDPKQRLGGGSEDAKEIMQHRFFASIVWQDVYEKKLSPPFKPQVTSETDTRYFDEEFTAQMITITPPDQDDSMEGVDSERRPHFPQFSYSASATA.

The PH domain occupies 5–108 (AIVKEGWLHK…WTTAIQTVAD (104 aa)). 2 positions are modified to N6-acetyllysine: lysine 14 and lysine 20. 14 to 19 (KRGEYI) contacts 1D-myo-inositol 1,3,4,5-tetrakisphosphate. 1D-myo-inositol 1,3,4,5-tetrakisphosphate-binding positions include 23-25 (RPR) and asparagine 53. Cysteine 60 and cysteine 77 are oxidised to a cystine. Arginine 86 is a 1D-myo-inositol 1,3,4,5-tetrakisphosphate binding site. A Phosphoserine modification is found at serine 124. Serine 129 is modified (phosphoserine; alternate). Residue serine 129 is glycosylated (O-linked (GlcNAc) serine; alternate). Positions 150-408 (FEYLKLLGKG…AKEIMQHRFF (259 aa)) constitute a Protein kinase domain. 156-164 (LGKGTFGKV) provides a ligand contact to ATP. Tyrosine 176 carries the post-translational modification Phosphotyrosine; by TNK2. Residue lysine 179 participates in ATP binding. Aspartate 274 serves as the catalytic Proton acceptor. Residue lysine 284 forms a Glycyl lysine isopeptide (Lys-Gly) (interchain with G-Cter in ubiquitin) linkage. Cysteines 296 and 310 form a disulfide. An O-linked (GlcNAc) threonine glycan is attached at threonine 305. Threonine 308 carries the phosphothreonine; by PDPK1 modification. O-linked (GlcNAc) threonine glycosylation is present at threonine 312. The 72-residue stretch at 409 to 480 (ASIVWQDVYE…QFSYSASATA (72 aa)) folds into the AGC-kinase C-terminal domain. Threonine 448 bears the Phosphothreonine mark. Position 450 is a phosphothreonine; by MTOR (threonine 450). A disordered region spans residues 450–480 (TPPDQDDSMEGVDSERRPHFPQFSYSASATA). The O-linked (GlcNAc) serine; alternate glycan is linked to serine 473. A Phosphoserine; by MTOR; alternate modification is found at serine 473. At tyrosine 474 the chain carries Phosphotyrosine. Serine 477 carries the post-translational modification Phosphoserine. Threonine 479 is subject to Phosphothreonine.

The protein belongs to the protein kinase superfamily. AGC Ser/Thr protein kinase family. RAC subfamily. In terms of assembly, interacts (via the C-terminus) with CCDC88A (via its C-terminus) and THEM4 (via its C-terminus). Interacts with AKTIP. Interacts (via PH domain) with MTCP1, TCL1A and TCL1B. Interacts with TRAF6. Interacts with GRB10; the interaction leads to GRB10 phosphorylation thus promoting YWHAE binding. Interacts with RARA; the interaction phosphorylates RARA and represses its transactivation activity. Interacts with MAP3K5 and TNK2. Interacts with BAD, CLK2, PPP2R5B, STK3 and STK4. Interacts (via PH domain) with SIRT1. Interacts with SRPK2 in a phosphorylation-dependent manner. Interacts with RAF1. Interacts with PKN2 (via C-terminal domain); the interaction occurs with the C-terminus cleavage products of PKN2 in apoptotic cells. Interacts with TRIM13; the interaction ubiquitinates AKT1 leading to its proteasomal degradation. Interacts with and phosphorylated by PDPK1. Interacts with BTBD10. Interacts with KCTD20. Interacts with PA2G4. Interacts with PA2G4. Interacts with KIF14; the interaction is detected in the plasma membrane upon INS stimulation and promotes AKT1 phosphorylation. Interacts with FAM83B; activates the PI3K/AKT signaling cascade. Interacts with WDFY2 (via WD repeats 1-3). Forms a complex with WDFY2 and FOXO1. Interacts with FAM168A. Interacts with SYAP1 (via phosphorylated form and BSD domain); this interaction is enhanced in a mTORC2-mediated manner in response to epidermal growth factor (EGF) stimulation and activates AKT1. Interacts with PKHM3. Interacts with FKBP5/FKBP51; promoting interaction between Akt/AKT1 and PHLPP1, thereby enhancing dephosphorylation and subsequent activation of Akt/AKT1. Interacts with TMEM175; leading to formation of the lysoK(GF) complex. Post-translationally, O-GlcNAcylation at Thr-305 and Thr-312 inhibits activating phosphorylation at Thr-308 via disrupting the interaction between AKT1 and PDPK1. O-GlcNAcylation at Ser-473 also probably interferes with phosphorylation at this site. In terms of processing, phosphorylation on Thr-308, Ser-473 and Tyr-474 is required for full activity. Phosphorylation of the activation loop at Thr-308 by PDPK1/PDK1 is a prerequisite for full activation. Phosphorylation by mTORC2 in response to growth factors plays a key role in AKT1 activation: mTORC2 phosphorylates different sites depending on the context, such as Thr-450, Ser-473, Ser-477 or Thr-479, thereby facilitating subsequent phosphorylation of the activation loop by PDPK1/PDK1. Phosphorylation at Ser-473 by mTORC2 promotes ubiquitination and degradation by the proteasome. Also phosphorylated at Ser-477 and Thr-479 by CDK2, facilitating subsequent phosphorylation of the activation loop by PDPK1/PDK1. Activated TNK2 phosphorylates it on Tyr-176 resulting in its binding to the anionic plasma membrane phospholipid PA. This phosphorylated form localizes to the cell membrane, where it is targeted by PDPK1 and PDPK2 for further phosphorylations on Thr-308 and Ser-473 leading to its activation. Phosphorylated at Thr-308 and Ser-473 by IKBKE and TBK1. Ser-473 phosphorylation is enhanced by interaction with AGAP2 isoform 2 (PIKE-A). Ser-473 phosphorylation is enhanced by signaling through activated FLT3. Ser-473 is dephosphorylated by PHLPP. Dephosphorylated at Thr-308 and Ser-473 by PP2A phosphatase. The phosphorylated form of PPP2R5B is required for bridging AKT1 with PP2A phosphatase. Ser-473 is dephosphorylated by CPPED1, leading to termination of signaling. AIM2 acts as an inhibitor of AKT1 by inhibiting phosphorylation Ser-473: AIM2 acts both by inhibiting the activity of PRKDC/DNA-PK kinase and promoting dephosphorylation by PP2A phosphatase. Ubiquitinated; undergoes both 'Lys-48'- and 'Lys-63'-linked polyubiquitination. TRAF6-induced 'Lys-63'-linked AKT1 ubiquitination is critical for phosphorylation and activation. When ubiquitinated, it translocates to the plasma membrane, where it becomes phosphorylated. When fully phosphorylated and translocated into the nucleus, undergoes 'Lys-48'-polyubiquitination catalyzed by TTC3, leading to its degradation by the proteasome. Ubiquitinated via 'Lys-48'-linked polyubiquitination by ZNRF1, leading to its degradation by the proteasome. Also ubiquitinated by TRIM13 leading to its proteasomal degradation. Phosphorylated, undergoes 'Lys-48'-linked polyubiquitination preferentially at Lys-284 catalyzed by MUL1, leading to its proteasomal degradation. Post-translationally, acetylated on Lys-14 and Lys-20 by the histone acetyltransferases EP300 and KAT2B. Acetylation results in reduced phosphorylation and inhibition of activity. Deacetylated at Lys-14 and Lys-20 by SIRT1. SIRT1-mediated deacetylation relieves the inhibition. In terms of processing, cleavage by caspase-3/CASP3. Cleaved at the caspase-3 consensus site Asp-462 during apoptosis, resulting in down-regulation of the AKT signaling pathway and decreased cell survival.

Its subcellular location is the cytoplasm. The protein localises to the nucleus. The protein resides in the cell membrane. It localises to the mitochondrion intermembrane space. It carries out the reaction L-seryl-[protein] + ATP = O-phospho-L-seryl-[protein] + ADP + H(+). The catalysed reaction is L-threonyl-[protein] + ATP = O-phospho-L-threonyl-[protein] + ADP + H(+). Functionally, AKT1 is one of 3 closely related serine/threonine-protein kinases (AKT1, AKT2 and AKT3) called the AKT kinase, and which regulate many processes including metabolism, proliferation, cell survival, growth and angiogenesis. This is mediated through serine and/or threonine phosphorylation of a range of downstream substrates. Over 100 substrate candidates have been reported so far, but for most of them, no isoform specificity has been reported. AKT is responsible of the regulation of glucose uptake by mediating insulin-induced translocation of the SLC2A4/GLUT4 glucose transporter to the cell surface. Phosphorylation of PTPN1 at 'Ser-50' negatively modulates its phosphatase activity preventing dephosphorylation of the insulin receptor and the attenuation of insulin signaling. Phosphorylation of TBC1D4 triggers the binding of this effector to inhibitory 14-3-3 proteins, which is required for insulin-stimulated glucose transport. AKT also regulates the storage of glucose in the form of glycogen by phosphorylating GSK3A at 'Ser-21' and GSK3B at 'Ser-9', resulting in inhibition of its kinase activity. Phosphorylation of GSK3 isoforms by AKT is also thought to be one mechanism by which cell proliferation is driven. AKT also regulates cell survival via the phosphorylation of MAP3K5 (apoptosis signal-related kinase). Phosphorylation of 'Ser-83' decreases MAP3K5 kinase activity stimulated by oxidative stress and thereby prevents apoptosis. AKT mediates insulin-stimulated protein synthesis by phosphorylating TSC2 at 'Ser-939' and 'Thr-1462', thereby activating the mTORC1 signaling pathway, and leading to both phosphorylation of 4E-BP1 and in activation of RPS6KB1. Also regulates the mTORC1 signaling pathway by catalyzing phosphorylation of CASTOR1 and DEPDC5. AKT plays a role as key modulator of the AKT-mTOR signaling pathway controlling the tempo of the process of newborn neurons integration during adult neurogenesis, including correct neuron positioning, dendritic development and synapse formation. Part of a positive feedback loop of mTORC2 signaling by mediating phosphorylation of MAPKAP1/SIN1, promoting mTORC2 activation. AKT is involved in the phosphorylation of members of the FOXO factors (Forkhead family of transcription factors), leading to binding of 14-3-3 proteins and cytoplasmic localization. In particular, FOXO1 is phosphorylated at 'Thr-24', 'Ser-256' and 'Ser-319'. FOXO3 and FOXO4 are phosphorylated on equivalent sites. AKT has an important role in the regulation of NF-kappa-B-dependent gene transcription and positively regulates the activity of CREB1 (cyclic AMP (cAMP)-response element binding protein). The phosphorylation of CREB1 induces the binding of accessory proteins that are necessary for the transcription of pro-survival genes such as BCL2 and MCL1. AKT phosphorylates 'Ser-454' on ATP citrate lyase (ACLY), thereby potentially regulating ACLY activity and fatty acid synthesis. Activates the 3B isoform of cyclic nucleotide phosphodiesterase (PDE3B) via phosphorylation of 'Ser-273', resulting in reduced cyclic AMP levels and inhibition of lipolysis. Phosphorylates PIKFYVE on 'Ser-318', which results in increased PI(3)P-5 activity. The Rho GTPase-activating protein DLC1 is another substrate and its phosphorylation is implicated in the regulation cell proliferation and cell growth. Signals downstream of phosphatidylinositol 3-kinase (PI(3)K) to mediate the effects of various growth factors such as platelet-derived growth factor (PDGF), epidermal growth factor (EGF), insulin and insulin-like growth factor 1 (IGF1). AKT mediates the antiapoptotic effects of IGF1. Essential for the SPATA13-mediated regulation of cell migration and adhesion assembly and disassembly. May be involved in the regulation of the placental development. Phosphorylates STK4/MST1 at 'Thr-120' and 'Thr-387' leading to inhibition of its: kinase activity, nuclear translocation, autophosphorylation and ability to phosphorylate FOXO3. Phosphorylates STK3/MST2 at 'Thr-117' and 'Thr-384' leading to inhibition of its: cleavage, kinase activity, autophosphorylation at Thr-180, binding to RASSF1 and nuclear translocation. Phosphorylates SRPK2 and enhances its kinase activity towards SRSF2 and ACIN1 and promotes its nuclear translocation. Phosphorylates RAF1 at 'Ser-259' and negatively regulates its activity. Phosphorylation of BAD stimulates its pro-apoptotic activity. Phosphorylates KAT6A at 'Thr-369' and this phosphorylation inhibits the interaction of KAT6A with PML and negatively regulates its acetylation activity towards p53/TP53. Phosphorylates palladin (PALLD), modulating cytoskeletal organization and cell motility. Phosphorylates prohibitin (PHB), playing an important role in cell metabolism and proliferation. Phosphorylates CDKN1A, for which phosphorylation at 'Thr-145' induces its release from CDK2 and cytoplasmic relocalization. These recent findings indicate that the AKT1 isoform has a more specific role in cell motility and proliferation. Phosphorylates CLK2 thereby controlling cell survival to ionizing radiation. Phosphorylates PCK1 at 'Ser-90', reducing the binding affinity of PCK1 to oxaloacetate and changing PCK1 into an atypical protein kinase activity using GTP as donor. Also acts as an activator of TMEM175 potassium channel activity in response to growth factors: forms the lysoK(GF) complex together with TMEM175 and acts by promoting TMEM175 channel activation, independently of its protein kinase activity. Acts as a negative regulator of the cGAS-STING pathway by mediating phosphorylation of CGAS during mitosis, leading to its inhibition. Acts as a regulator of mitochondrial calcium uptake by mediating phosphorylation of MICU1 in the mitochondrial intermembrane space, impairing MICU1 maturation. Acts as an inhibitor of tRNA methylation by mediating phosphorylation of the N-terminus of METTL1, thereby inhibiting METTL1 methyltransferase activity. In response to LPAR1 receptor pathway activation, phosphorylates Rabin8/RAB3IP which alters its activity and phosphorylates WDR44 which induces WDR44 binding to Rab11, thereby switching Rab11 vesicular function from preciliary trafficking to endocytic recycling. This Bos taurus (Bovine) protein is RAC-alpha serine/threonine-protein kinase (AKT1).